Here is a 372-residue protein sequence, read N- to C-terminus: Heat-inducible transcription repressor HrcA (372 aa).

The segment at 296–331 is disordered; that stretch reads VSSGYGRSGEAGEPAGNDPVGEPETESETESQTNDM.

It belongs to the HrcA family.

In terms of biological role, negative regulator of class I heat shock genes (grpE-dnaK-dnaJ and groELS operons). Prevents heat-shock induction of these operons. The sequence is that of Heat-inducible transcription repressor HrcA from Bifidobacterium longum subsp. infantis (strain ATCC 15697 / DSM 20088 / JCM 1222 / NCTC 11817 / S12).